The following is a 233-amino-acid chain: Large ribosomal subunit protein eL6y (233 aa).

The span at His-48–Lys-72 shows a compositional bias: basic and acidic residues. Residues His-48–Pro-82 form a disordered region.

This sequence belongs to the eukaryotic ribosomal protein eL6 family.

This is Large ribosomal subunit protein eL6y (RPL6B) from Arabidopsis thaliana (Mouse-ear cress).